We begin with the raw amino-acid sequence, 954 residues long: uncharacterized protein (954 aa).

The N-terminal stretch at 1–35 (MKILFNNTFELFCLFVFVTWALFLNNNGILYPVHC) is a signal peptide. Residues 381–415 (KNKISSARDDIQKDINKMESELINVSNEINRLDIV) adopt a coiled-coil conformation. The interval 733–765 (NIRNDNNNNNNNNNNNSNNNNNNNNNNKDNSVA) is disordered. Low complexity predominate over residues 736–763 (NDNNNNNNNNNNNSNNNNNNNNNNKDNS).

This is an uncharacterized protein from Plasmodium falciparum (isolate 3D7).